The following is a 71-amino-acid chain: DNA-directed RNA polymerase subunit epsilon (71 aa).

The protein belongs to the RNA polymerase subunit epsilon family. In terms of assembly, RNAP is composed of a core of 2 alpha, a beta and a beta' subunit. The core is associated with a delta subunit, and at least one of epsilon or omega. When a sigma factor is associated with the core the holoenzyme is formed, which can initiate transcription.

It carries out the reaction RNA(n) + a ribonucleoside 5'-triphosphate = RNA(n+1) + diphosphate. Functionally, a non-essential component of RNA polymerase (RNAP). The polypeptide is DNA-directed RNA polymerase subunit epsilon (Anoxybacillus flavithermus (strain DSM 21510 / WK1)).